The following is a 118-amino-acid chain: Myotrophin (118 aa).

Cys2 carries the post-translational modification N-acetylcysteine. The ANK 1 repeat unit spans residues Cys2 to Arg30. 3 positions are modified to N6-acetyllysine: Lys4, Lys11, and Lys24. The residue at position 31 (Thr31) is a Phosphothreonine. ANK repeat units lie at residues Gly34–Lys66 and His67–Pro99.

It belongs to the myotrophin family. As to quaternary structure, interacts with the heterodimer formed by CAPZA1 and CAPZB. Interacts with RELA.

It localises to the cytoplasm. The protein resides in the nucleus. Its subcellular location is the perinuclear region. Its function is as follows. Plays a role in the regulation of the growth of actin filaments. Inhibits the activity of the F-actin-capping protein complex formed by the CAPZA1 and CAPZB heterodimer. Promotes dimerization of NF-kappa-B subunits and regulates NF-kappa-B transcription factor activity. Promotes growth of cardiomyocytes, but not cardiomyocyte proliferation. Promotes cardiac muscle hypertrophy. This is Myotrophin (Mtpn) from Rattus norvegicus (Rat).